Consider the following 333-residue polypeptide: Methionine import ATP-binding protein MetN 1 (333 aa).

Residues 2–241 enclose the ABC transporter domain; the sequence is ITFEGVEKVY…PETETAKSFV (240 aa). Residue 38 to 45 coordinates ATP; the sequence is GFSGAGKS.

Belongs to the ABC transporter superfamily. Methionine importer (TC 3.A.1.24) family. As to quaternary structure, the complex is composed of two ATP-binding proteins (MetN), two transmembrane proteins (MetI) and a solute-binding protein (MetQ).

It is found in the cell membrane. The catalysed reaction is L-methionine(out) + ATP + H2O = L-methionine(in) + ADP + phosphate + H(+). The enzyme catalyses D-methionine(out) + ATP + H2O = D-methionine(in) + ADP + phosphate + H(+). Functionally, part of the ABC transporter complex MetNIQ involved in methionine import. Responsible for energy coupling to the transport system. In Bacillus licheniformis (strain ATCC 14580 / DSM 13 / JCM 2505 / CCUG 7422 / NBRC 12200 / NCIMB 9375 / NCTC 10341 / NRRL NRS-1264 / Gibson 46), this protein is Methionine import ATP-binding protein MetN 1.